A 303-amino-acid chain; its full sequence is Sulfate adenylyltransferase subunit 2 (303 aa).

This sequence belongs to the PAPS reductase family. CysD subfamily. Heterodimer composed of CysD, the smaller subunit, and CysN.

It catalyses the reaction sulfate + ATP + H(+) = adenosine 5'-phosphosulfate + diphosphate. The protein operates within sulfur metabolism; hydrogen sulfide biosynthesis; sulfite from sulfate: step 1/3. Functionally, with CysN forms the ATP sulfurylase (ATPS) that catalyzes the adenylation of sulfate producing adenosine 5'-phosphosulfate (APS) and diphosphate, the first enzymatic step in sulfur assimilation pathway. APS synthesis involves the formation of a high-energy phosphoric-sulfuric acid anhydride bond driven by GTP hydrolysis by CysN coupled to ATP hydrolysis by CysD. This Sulfurovum sp. (strain NBC37-1) protein is Sulfate adenylyltransferase subunit 2.